The chain runs to 183 residues: ATP synthase subunit delta (183 aa).

The protein belongs to the ATPase delta chain family. In terms of assembly, F-type ATPases have 2 components, F(1) - the catalytic core - and F(0) - the membrane proton channel. F(1) has five subunits: alpha(3), beta(3), gamma(1), delta(1), epsilon(1). F(0) has three main subunits: a(1), b(2) and c(10-14). The alpha and beta chains form an alternating ring which encloses part of the gamma chain. F(1) is attached to F(0) by a central stalk formed by the gamma and epsilon chains, while a peripheral stalk is formed by the delta and b chains.

The protein resides in the cell inner membrane. Its function is as follows. F(1)F(0) ATP synthase produces ATP from ADP in the presence of a proton or sodium gradient. F-type ATPases consist of two structural domains, F(1) containing the extramembraneous catalytic core and F(0) containing the membrane proton channel, linked together by a central stalk and a peripheral stalk. During catalysis, ATP synthesis in the catalytic domain of F(1) is coupled via a rotary mechanism of the central stalk subunits to proton translocation. In terms of biological role, this protein is part of the stalk that links CF(0) to CF(1). It either transmits conformational changes from CF(0) to CF(1) or is implicated in proton conduction. The chain is ATP synthase subunit delta from Thermotoga neapolitana (strain ATCC 49049 / DSM 4359 / NBRC 107923 / NS-E).